The following is an 806-amino-acid chain: Transitional endoplasmic reticulum ATPase (806 aa).

Position 2 is an N-acetylalanine (Ala-2). Phosphoserine occurs at positions 3 and 7. Lys-8 is covalently cross-linked (Glycyl lysine isopeptide (Lys-Gly) (interchain with G-Cter in SUMO2)). A Phosphoserine modification is found at Ser-13. A Glycyl lysine isopeptide (Lys-Gly) (interchain with G-Cter in SUMO2) cross-link involves residue Lys-18. Ser-37 carries the phosphoserine modification. 247-253 (PGTGKTL) is an ATP binding site. Lys-315 bears the N6,N6,N6-trimethyllysine; by VCPKMT mark. ATP-binding residues include Asn-348 and His-384. Residue Thr-436 is modified to Phosphothreonine. Position 462 is a phosphoserine (Ser-462). N6-acetyllysine occurs at positions 502 and 505. 521–526 (GCGKTL) provides a ligand contact to ATP. Position 668 is an N6-acetyllysine; alternate (Lys-668). At Lys-668 the chain carries N6-succinyllysine; alternate. At Ser-702 the chain carries Phosphoserine. The segment at 708–727 (RRERERQTNPSAMEVEEDDP) is disordered. Residue Lys-754 is modified to N6-acetyllysine. Residues 768 to 806 (FGSFRFPSGNQGGAGPSQGSGGGTGGSVYTEDNDDDLYG) form a disordered region. Ser-770, Ser-775, and Ser-787 each carry phosphoserine. Residues 777 to 793 (NQGGAGPSQGSGGGTGG) show a composition bias toward gly residues. The segment at 797–806 (TEDNDDDLYG) is interaction with UBXN6. Tyr-805 carries the post-translational modification Phosphotyrosine.

It belongs to the AAA ATPase family. As to quaternary structure, homohexamer. Forms a ring-shaped particle of 12.5 nm diameter, that displays 6-fold radial symmetry. Part of a ternary complex containing STX5A, NSFL1C and VCP. NSFL1C forms a homotrimer that binds to one end of a VCP homohexamer. The complex binds to membranes enriched in phosphatidylethanolamine-containing lipids and promotes Golgi membrane fusion. Binds to a heterodimer of NPLOC4 and UFD1, binding to this heterodimer inhibits Golgi-membrane fusion. Interaction with VCIP135 leads to dissociation of the complex via ATP hydrolysis by VCP. Part of a ternary complex containing NPLOC4, UFD1 and VCP. Interacts with NSFL1C-like protein p37; the complex has membrane fusion activity and is required for Golgi and endoplasmic reticulum biogenesis. Interacts with SELENOS and SYVN1, as well as with DERL1 (via SHP-box motif), DERL2 and DERL3; which probably transfer misfolded proteins from the ER to VCP. Interacts with SVIP and DERL1. Component of a complex required to couple retrotranslocation, ubiquitination and deglycosylation composed of NGLY1, SAKS1, AMFR, VCP and RAD23B. Part of a complex composed of STUB1/CHIP, VCP/p97, CHRNA3, and UBXN2A that modulates the ubiquitination and endoplasmic reticulum-associated degradation (ERAD) of CHRNA3. Within the complex UBXN2A acts as a scaffold protein required for the interaction of CHRNA3 with VCP/p97, this interaction also inhibits CHRNA3 ubiquitination by STUB1/CHIP and subsequently ERAD. Interacts with UBXN2A (via UBX domain); the interaction is required for the interaction of CHRNA3 in the STUB1-VCP-UBXN2A complex. Directly interacts with UBXN4 and RNF19A. Interacts with CASR. Interacts with UBE4B and YOD1. Interacts with clathrin. Interacts with RNF103. Interacts with TRIM13 and TRIM21. Component of a VCP/p97-AMFR/gp78 complex that participates in the final step of the endoplasmic reticulum-associated degradation (ERAD) of HMGCR. Interacts directly with AMFR/gp78 (via its VIM). Interacts with RHBDD1 (via C-terminal domain). Interacts with SPRTN; leading to recruitment to stalled replication forks. Interacts with WASHC5. Interacts with UBOX5. Interacts (via N-terminus) with UBXN7, UBXN8, and probably several other UBX domain-containing proteins (via UBX domains); the interactions are mutually exclusive with VIM-dependent interactions such as those with AMFR and SELENOS. Forms a complex with UBQLN1 and UBXN4. Interacts (via the PIM motif) with RNF31 (via the PUB domain). Interacts with RIGI and RNF125; interaction takes place when RIGI is ubiquitinated via 'Lys-63'-linked ubiquitin on its CARD domains, leading to recruit RNF125 and promote ubiquitination and degradation of RIGI. Interacts with BAG6. Interacts with UBXN10. Interacts with UBXN6; the interaction with UBXN6 is direct and competitive with UFD1. Forms a ternary complex with CAV1 and UBXN6. Interacts with PLAA, UBXN6 and YOD1; may form a complex involved in macroautophagy. Interacts with ANKZF1. Interacts with ubiquitin-binding protein FAF1. Interacts with ZFAND2B (via VIM motif); the interaction is direct. Interacts with ZFAND1 (via its ubiquitin-like region); this interaction occurs in an arsenite-dependent manner. Interacts with CCDC47. Interacts with LMBR1L and UBAC2. Interacts with ATXN3. Interacts with TEX264; bridging VCP to covalent DNA-protein cross-links (DPCs). Mg(2+) serves as cofactor. In terms of processing, ISGylated. Post-translationally, methylation at Lys-315 catalyzed by VCPKMT is increased in the presence of ASPSCR1. Lys-315 methylation may decrease ATPase activity. Phosphorylated by tyrosine kinases in response to T-cell antigen receptor activation. Phosphorylated in mitotic cells.

The protein localises to the cytoplasm. It is found in the cytosol. It localises to the endoplasmic reticulum. Its subcellular location is the nucleus. The protein resides in the stress granule. It catalyses the reaction ATP + H2O = ADP + phosphate + H(+). Functionally, necessary for the fragmentation of Golgi stacks during mitosis and for their reassembly after mitosis. Involved in the formation of the transitional endoplasmic reticulum (tER). The transfer of membranes from the endoplasmic reticulum to the Golgi apparatus occurs via 50-70 nm transition vesicles which derive from part-rough, part-smooth transitional elements of the endoplasmic reticulum (tER). Vesicle budding from the tER is an ATP-dependent process. The ternary complex containing UFD1, VCP and NPLOC4 binds ubiquitinated proteins and is necessary for the export of misfolded proteins from the ER to the cytoplasm, where they are degraded by the proteasome. The NPLOC4-UFD1-VCP complex regulates spindle disassembly at the end of mitosis and is necessary for the formation of a closed nuclear envelope. Regulates E3 ubiquitin-protein ligase activity of RNF19A. Component of the VCP/p97-AMFR/gp78 complex that participates in the final step of the sterol-mediated ubiquitination and endoplasmic reticulum-associated degradation (ERAD) of HMGCR. Mediates the endoplasmic reticulum-associated degradation of CHRNA3 in cortical neurons as part of the STUB1-VCP-UBXN2A complex. Involved in endoplasmic reticulum stress-induced pre-emptive quality control, a mechanism that selectively attenuates the translocation of newly synthesized proteins into the endoplasmic reticulum and reroutes them to the cytosol for proteasomal degradation. Involved in clearance process by mediating G3BP1 extraction from stress granules. Also involved in DNA damage response: recruited to double-strand breaks (DSBs) sites in a RNF8- and RNF168-dependent manner and promotes the recruitment of TP53BP1 at DNA damage sites. Recruited to stalled replication forks by SPRTN: may act by mediating extraction of DNA polymerase eta (POLH) to prevent excessive translesion DNA synthesis and limit the incidence of mutations induced by DNA damage. Together with SPRTN metalloprotease, involved in the repair of covalent DNA-protein cross-links (DPCs) during DNA synthesis. Involved in interstrand cross-link repair in response to replication stress by mediating unloading of the ubiquitinated CMG helicase complex. Mediates extraction of PARP1 trapped to chromatin: recognizes and binds ubiquitinated PARP1 and promotes its removal. Required for cytoplasmic retrotranslocation of stressed/damaged mitochondrial outer-membrane proteins and their subsequent proteasomal degradation. Essential for the maturation of ubiquitin-containing autophagosomes and the clearance of ubiquitinated protein by autophagy. Acts as a negative regulator of type I interferon production by interacting with RIGI: interaction takes place when RIGI is ubiquitinated via 'Lys-63'-linked ubiquitin on its CARD domains, leading to recruit RNF125 and promote ubiquitination and degradation of RIGI. May play a role in the ubiquitin-dependent sorting of membrane proteins to lysosomes where they undergo degradation. May more particularly play a role in caveolins sorting in cells. By controlling the steady-state expression of the IGF1R receptor, indirectly regulates the insulin-like growth factor receptor signaling pathway. The chain is Transitional endoplasmic reticulum ATPase (VCP) from Sus scrofa (Pig).